A 150-amino-acid chain; its full sequence is 3-dehydroquinate dehydratase (150 aa).

The Proton acceptor role is filled by Tyr-22. Asn-73, His-79, and Asp-86 together coordinate substrate. The active-site Proton donor is the His-99. Substrate-binding positions include 100-101 (LS) and Arg-110.

The protein belongs to the type-II 3-dehydroquinase family. As to quaternary structure, homododecamer.

It carries out the reaction 3-dehydroquinate = 3-dehydroshikimate + H2O. It participates in metabolic intermediate biosynthesis; chorismate biosynthesis; chorismate from D-erythrose 4-phosphate and phosphoenolpyruvate: step 3/7. Functionally, catalyzes a trans-dehydration via an enolate intermediate. The protein is 3-dehydroquinate dehydratase of Dinoroseobacter shibae (strain DSM 16493 / NCIMB 14021 / DFL 12).